A 307-amino-acid polypeptide reads, in one-letter code: Transcription initiation factor IIF subunit beta (307 aa).

The segment covering Met1 to Glu12 has biased composition (basic and acidic residues). Disordered regions lie at residues Met1–Asp22 and Val261–Val307. Acidic residues predominate over residues Asp13–Asp22. Residues Leu263 to Thr290 are compositionally biased toward polar residues. Positions Ala292 to Val307 are enriched in acidic residues.

Belongs to the TFIIF beta subunit family. Component of the fcp1/TFIIF/polII complex via interaction of tfg3 with both tfg1/TFIIF-alpha and tfg2/TFIIF-beta subunits.

The protein localises to the nucleus. In terms of biological role, TFIIF is a general transcription initiation factor that binds to RNA polymerase II and helps to recruit it to the initiation complex in collaboration with TFIIB. It promotes transcription elongation. This is Transcription initiation factor IIF subunit beta (tfg2) from Schizosaccharomyces pombe (strain 972 / ATCC 24843) (Fission yeast).